Consider the following 350-residue polypeptide: MQGNGSALPNASQPVLRGDGARPSWLASALACVLIFTIVVDILGNLLVILSVYRNKKLRNAGNIFVVSLAVADLVVAIYPYPLVLMSIFNNGWNLGYLHCQVSGFLMGLSVIGSIFNITGIAINRYCYICHSLKYDKLYSSKNSLCYVLLIWLLTLAAVLPNLRAGTLQYDPRIYSCTFAQSVSSAYTIAVVVFHFLVPMIIVIFCYLRIWILVLQVRQRVKPDRKPKLKPQDFRNFVTMFVVFVLFAICWAPLNFIGLAVASDPASMVPRIPEWLFVASYYMAYFNSCLNAIIYGLLNQNFRKEYRRIIVSLCTARVFFVDSSNDVADRVKWKPSPLMTNNNVVKVDSV.

The Extracellular segment spans residues 1 to 29 (MQGNGSALPNASQPVLRGDGARPSWLASA). Residues asparagine 4 and asparagine 10 are each glycosylated (N-linked (GlcNAc...) asparagine). A helical transmembrane segment spans residues 30–50 (LACVLIFTIVVDILGNLLVIL). Residues 51–63 (SVYRNKKLRNAGN) lie on the Cytoplasmic side of the membrane. A helical membrane pass occupies residues 64–84 (IFVVSLAVADLVVAIYPYPLV). Over 85–102 (LMSIFNNGWNLGYLHCQV) the chain is Extracellular. A disulfide bridge links cysteine 100 with cysteine 177. Residues 103 to 123 (SGFLMGLSVIGSIFNITGIAI) traverse the membrane as a helical segment. At 124 to 142 (NRYCYICHSLKYDKLYSSK) the chain is on the cytoplasmic side. The chain crosses the membrane as a helical span at residues 143 to 163 (NSLCYVLLIWLLTLAAVLPNL). Melatonin contacts are provided by asparagine 162 and glutamine 181. Over 164–187 (RAGTLQYDPRIYSCTFAQSVSSAY) the chain is Extracellular. Residues 188-208 (TIAVVVFHFLVPMIIVIFCYL) form a helical membrane-spanning segment. Over 209-240 (RIWILVLQVRQRVKPDRKPKLKPQDFRNFVTM) the chain is Cytoplasmic. The helical transmembrane segment at 241 to 261 (FVVFVLFAICWAPLNFIGLAV) threads the bilayer. The Extracellular segment spans residues 262–274 (ASDPASMVPRIPE). A helical transmembrane segment spans residues 275-295 (WLFVASYYMAYFNSCLNAIIY). Residues 296 to 350 (GLLNQNFRKEYRRIIVSLCTARVFFVDSSNDVADRVKWKPSPLMTNNNVVKVDSV) lie on the Cytoplasmic side of the membrane.

Belongs to the G-protein coupled receptor 1 family. As to expression, expressed in hypophyseal pars tuberalis and hypothalamic suprachiasmatic nuclei (SCN). Hippocampus.

It localises to the cell membrane. Its function is as follows. High affinity receptor for melatonin. Likely to mediate the reproductive and circadian actions of melatonin. The activity of this receptor is mediated by pertussis toxin sensitive G proteins that inhibit adenylate cyclase activity. Possibly involved in sleep induction, by melatonin activation of the potassium channel KCNMA1/BK and the dissociation of G-beta and G-gamma subunits, thereby decreasing synaptic transmission. This is Melatonin receptor type 1A (MTNR1A) from Homo sapiens (Human).